We begin with the raw amino-acid sequence, 192 residues long: Ion-translocating oxidoreductase complex subunit A (192 aa).

The next 6 membrane-spanning stretches (helical) occupy residues 5–25, 38–58, 72–92, 102–122, 134–154, and 171–191; these read LLLLIGTVLVNNFVLVKFLGL, AIGMSMATTFVLTLASVLSFL, LRTMSFILVIAVVVQFTEMLV, ALGIYLPLITTNCAVLGVALL, AIYGFGAAVGFSMVLILFSAM, and AIAMITAGLMSLAFMGFAGLI.

The protein belongs to the NqrDE/RnfAE family. The complex is composed of six subunits: RnfA, RnfB, RnfC, RnfD, RnfE and RnfG.

It localises to the cell inner membrane. Part of a membrane-bound complex that couples electron transfer with translocation of ions across the membrane. The chain is Ion-translocating oxidoreductase complex subunit A from Shewanella denitrificans (strain OS217 / ATCC BAA-1090 / DSM 15013).